A 662-amino-acid chain; its full sequence is Interleukin-12 receptor subunit beta-1 (662 aa).

An N-terminal signal peptide occupies residues 1–23 (MEPLVTWVVPLLFLFLLSRQGAA). The Extracellular segment spans residues 24 to 545 (CRTSECCFQD…RFSIEVQVSD (522 aa)). 5 Fibronectin type-III domains span residues 46-136 (GPRD…LYNS), 142-234 (PLGD…VPPE), 237-337 (PQPQ…IPAD), 338-444 (THTE…GNAS), and 448-542 (TPHH…IEVQ). C52 and C62 are disulfide-bonded. N-linked (GlcNAc...) asparagine glycosylation is present at N121. The WSXWS motif motif lies at 222–226 (WSKWS). Residues N329, N346, N352, N442, and N456 are each glycosylated (N-linked (GlcNAc...) asparagine). The chain crosses the membrane as a helical span at residues 546 to 570 (WLIFFASLGSFLSILLVGVLGYLGL). Residues 571 to 662 (NRAARHLCPP…EDGDRCKAKM (92 aa)) lie on the Cytoplasmic side of the membrane. The Box 1 motif signature appears at 577 to 585 (LCPPLPTPC). A compositionally biased stretch (basic and acidic residues) spans 626–637 (GERTEPLEKTEL). Residues 626–648 (GERTEPLEKTELPEGAPELALDT) form a disordered region.

Belongs to the type I cytokine receptor family. Type 2 subfamily. Dimer or oligomer; disulfide-linked. Interacts with IL12RB2 to form the high affinity IL12 receptor. Heterodimer with IL23R; in presence of IL23. The heterodimer forms the IL23 receptor.

The protein localises to the membrane. Its function is as follows. Functions as an interleukin receptor which binds interleukin-12 with low affinity and is involved in IL12 transduction. Associated with IL12RB2 it forms a functional, high affinity receptor for IL12. Also associates with IL23R to form the interleukin-23 receptor which functions in IL23 signal transduction probably through activation of the Jak-Stat signaling cascade. This chain is Interleukin-12 receptor subunit beta-1 (IL12RB1), found in Homo sapiens (Human).